A 290-amino-acid chain; its full sequence is Cbb3-type cytochrome c oxidase subunit CcoP (290 aa).

The interval 1–22 (MSVKPTKQKPGEPPTTGHSWDG) is disordered. The Cytoplasmic portion of the chain corresponds to 1–37 (MSVKPTKQKPGEPPTTGHSWDGIEEFDNPMPRWWLWT). The helical transmembrane segment at 38-58 (FYVTIVWAIGYSILYPAWPLI) threads the bilayer. Residues 59 to 290 (NGATNGLIGH…VYVHGLGGGE (232 aa)) lie on the Periplasmic side of the membrane. 2 consecutive Cytochrome c domains span residues 109-199 (YATN…LQIS) and 206-287 (ALSA…HGLG). Residues Cys122, Cys125, His126, Met174, Cys219, Cys222, His223, and Met264 each coordinate heme c.

This sequence belongs to the CcoP / FixP family. Component of the cbb3-type cytochrome c oxidase at least composed of CcoN, CcoO, CcoQ and CcoP. Requires heme c as cofactor.

It is found in the cell inner membrane. The protein operates within energy metabolism; oxidative phosphorylation. In terms of biological role, C-type cytochrome. Part of the cbb3-type cytochrome c oxidase complex. CcoP subunit is required for transferring electrons from donor cytochrome c via its heme groups to CcoO subunit. From there, electrons are shuttled to the catalytic binuclear center of CcoN subunit where oxygen reduction takes place. The complex also functions as a proton pump. The protein is Cbb3-type cytochrome c oxidase subunit CcoP of Cereibacter sphaeroides (strain ATCC 17023 / DSM 158 / JCM 6121 / CCUG 31486 / LMG 2827 / NBRC 12203 / NCIMB 8253 / ATH 2.4.1.) (Rhodobacter sphaeroides).